Here is a 65-residue protein sequence, read N- to C-terminus: Small ribosomal subunit protein bS21 (65 aa).

The protein belongs to the bacterial ribosomal protein bS21 family.

This chain is Small ribosomal subunit protein bS21, found in Chlorobium chlorochromatii (strain CaD3).